A 108-amino-acid chain; its full sequence is MGLSLAAYAGAALAEIAGCFAVWAWWRLGASALWLVPGALSLGTFAWLLALTPVEAAGRSYAVYGGVYVAASLLWLWAVEGVRPDRWDMGGAALVLAGAAVILWAPRG.

4 helical membrane passes run 5–25 (LAAY…VWAW), 32–52 (ALWL…LALT), 62–82 (AVYG…VEGV), and 86–106 (RWDM…LWAP).

This sequence belongs to the UPF0060 family.

Its subcellular location is the cell inner membrane. In Cereibacter sphaeroides (strain ATCC 17023 / DSM 158 / JCM 6121 / CCUG 31486 / LMG 2827 / NBRC 12203 / NCIMB 8253 / ATH 2.4.1.) (Rhodobacter sphaeroides), this protein is UPF0060 membrane protein RHOS4_03690.